Reading from the N-terminus, the 97-residue chain is MKLRPLHDRVVIRRSEEESKTAGGIVLPGSAAEKPNRGEVVAVGTGRILDNGEVRALAVKVGDKVVFGPYSGSNTVKVDGEDLLVMAENEILAVIEG.

The protein belongs to the GroES chaperonin family. As to quaternary structure, heptamer of 7 subunits arranged in a ring. Interacts with the chaperonin GroEL.

The protein resides in the cytoplasm. Functionally, together with the chaperonin GroEL, plays an essential role in assisting protein folding. The GroEL-GroES system forms a nano-cage that allows encapsulation of the non-native substrate proteins and provides a physical environment optimized to promote and accelerate protein folding. GroES binds to the apical surface of the GroEL ring, thereby capping the opening of the GroEL channel. The protein is Co-chaperonin GroES of Pseudomonas entomophila (strain L48).